We begin with the raw amino-acid sequence, 602 residues long: Beta-(1--&gt;2)glucan export ATP-binding/permease protein NdvA (602 aa).

Residues 21–306 (GWLLAFANLL…VVSFINNVFM (286 aa)) form the ABC transmembrane type-1 domain. The next 6 helical transmembrane spans lie at 22-42 (WLLAFANLLLAASQFAEPVLF), 63-83 (FLAAWVAFGLFTIACSALVAL), 141-161 (EHFAAILSVVVLLPLSLYLNW), 163-183 (LAILLFVLCIVFTALTTFVVR), 240-262 (VLSWWALVTVITRASTTITVLAI), and 280-300 (IVMFVSFATLLIQKLEQVVSF). In terms of domain architecture, ABC transporter spans 340–573 (VEFNDVTFSY…GGHFAELARA (234 aa)). Residue 373–380 (GPTGAGKS) coordinates ATP.

It belongs to the ABC transporter superfamily. Beta-(1--&gt;2)glucan exporter (TC 3.A.1.108.1) family. In terms of assembly, homodimer.

Its subcellular location is the cell inner membrane. The enzyme catalyses [(1-&gt;2)-beta-D-glucosyl](n)(in) + ATP + H2O = [(1-&gt;2)-beta-D-glucosyl](n)(out) + ADP + phosphate + H(+). Functionally, involved in beta-(1--&gt;2)glucan export. Transmembrane domains (TMD) form a pore in the inner membrane and the ATP-binding domain (NBD) is responsible for energy generation. The sequence is that of Beta-(1--&gt;2)glucan export ATP-binding/permease protein NdvA from Bradyrhizobium diazoefficiens (strain JCM 10833 / BCRC 13528 / IAM 13628 / NBRC 14792 / USDA 110).